A 481-amino-acid polypeptide reads, in one-letter code: Aspartyl/glutamyl-tRNA(Asn/Gln) amidotransferase subunit B (481 aa).

The segment at 29–50 is disordered; that stretch reads SSSKSSHTDPKNTNISPIDLGH.

The protein belongs to the GatB/GatE family. GatB subfamily. In terms of assembly, heterotrimer of A, B and C subunits.

The enzyme catalyses L-glutamyl-tRNA(Gln) + L-glutamine + ATP + H2O = L-glutaminyl-tRNA(Gln) + L-glutamate + ADP + phosphate + H(+). It catalyses the reaction L-aspartyl-tRNA(Asn) + L-glutamine + ATP + H2O = L-asparaginyl-tRNA(Asn) + L-glutamate + ADP + phosphate + 2 H(+). Allows the formation of correctly charged Asn-tRNA(Asn) or Gln-tRNA(Gln) through the transamidation of misacylated Asp-tRNA(Asn) or Glu-tRNA(Gln) in organisms which lack either or both of asparaginyl-tRNA or glutaminyl-tRNA synthetases. The reaction takes place in the presence of glutamine and ATP through an activated phospho-Asp-tRNA(Asn) or phospho-Glu-tRNA(Gln). This Malacoplasma penetrans (strain HF-2) (Mycoplasma penetrans) protein is Aspartyl/glutamyl-tRNA(Asn/Gln) amidotransferase subunit B.